Consider the following 378-residue polypeptide: Metalloendoproteinase 2-MMP (378 aa).

An N-terminal signal peptide occupies residues 1–20 (MRFCVFGFLSLFLIVSPASA). Residues 21–154 (WFFPNSTAVP…SRTHLHAVKR (134 aa)) constitute a propeptide, activation peptide. 5 N-linked (GlcNAc...) asparagine glycosylation sites follow: Asn-25, Asn-35, Asn-46, Asn-79, and Asn-102. The Cysteine switch motif lies at 118 to 125 (PRCGNPDV). Cys-120 contacts Zn(2+). N-linked (GlcNAc...) asparagine glycosylation is found at Asn-127, Asn-143, and Asn-203. Residue His-280 participates in Zn(2+) binding. Residue Glu-281 is part of the active site. Residues His-284 and His-290 each contribute to the Zn(2+) site. N-linked (GlcNAc...) asparagine glycosylation is present at Asn-330. Ser-349 carries the GPI-anchor amidated serine lipid modification. A propeptide spans 350–378 (AAWRIDGSSRSTIVSLLLSTVGLVLWFLP) (removed in mature form).

This sequence belongs to the peptidase M10A family. Matrix metalloproteinases (MMPs) subfamily. Requires Zn(2+) as cofactor. In terms of tissue distribution, mostly expressed in roots, and, to a lower extent, in flowers, leaves and stems.

The protein resides in the cell membrane. Repressed by acetohydroxamic acid (AHA). Its function is as follows. Matrix metalloproteinases (MMPs) or matrixins may play a role in the degradation and remodeling of the extracellular matrix (ECM) during development or in response to stresses. Required for plant growth, morphogenesis, and development with particular relevance for flowering and senescence. Active on McaPLGLDpaAR-NH(2) (QF24) and myelin basic protein (MBP) and, to some extent, on beta-casein. In Arabidopsis thaliana (Mouse-ear cress), this protein is Metalloendoproteinase 2-MMP.